The following is a 521-amino-acid chain: Bifunctional purine biosynthesis protein PurH (521 aa).

In terms of domain architecture, MGS-like spans 1-145; the sequence is MIKQALISVS…KNHRDVTVVV (145 aa).

This sequence belongs to the PurH family.

The catalysed reaction is (6R)-10-formyltetrahydrofolate + 5-amino-1-(5-phospho-beta-D-ribosyl)imidazole-4-carboxamide = 5-formamido-1-(5-phospho-D-ribosyl)imidazole-4-carboxamide + (6S)-5,6,7,8-tetrahydrofolate. It carries out the reaction IMP + H2O = 5-formamido-1-(5-phospho-D-ribosyl)imidazole-4-carboxamide. It participates in purine metabolism; IMP biosynthesis via de novo pathway; 5-formamido-1-(5-phospho-D-ribosyl)imidazole-4-carboxamide from 5-amino-1-(5-phospho-D-ribosyl)imidazole-4-carboxamide (10-formyl THF route): step 1/1. Its pathway is purine metabolism; IMP biosynthesis via de novo pathway; IMP from 5-formamido-1-(5-phospho-D-ribosyl)imidazole-4-carboxamide: step 1/1. The chain is Bifunctional purine biosynthesis protein PurH from Paraburkholderia xenovorans (strain LB400).